The chain runs to 297 residues: tRNA (guanine(37)-N(1))/4-demethylwyosine(37)-methyltransferase Taw22 (297 aa).

Residues Arg89, Phe106, and 128–129 (EL) contribute to the S-adenosyl-L-methionine site.

This sequence belongs to the class I-like SAM-binding methyltransferase superfamily. TRM5/TYW2 family.

It localises to the cytoplasm. The catalysed reaction is guanosine(37) in tRNA + S-adenosyl-L-methionine = N(1)-methylguanosine(37) in tRNA + S-adenosyl-L-homocysteine + H(+). It carries out the reaction 4-demethylwyosine(37) in tRNA(Phe) + S-adenosyl-L-methionine = isowyosine(37) in tRNA(Phe) + S-adenosyl-L-homocysteine + H(+). Functionally, catalyzes both the N1-methylation of guanosine and the C7-methylation of 4-demethylwyosine (imG-14) at position 37 in tRNA(Phe). The protein is tRNA (guanine(37)-N(1))/4-demethylwyosine(37)-methyltransferase Taw22 of Nanoarchaeum equitans (strain Kin4-M).